The chain runs to 203 residues: Probable GTP-binding protein EngB (203 aa).

The region spanning 24–199 is the EngB-type G domain; sequence DGSEVAFAGR…HTVIETWLGL (176 aa). GTP contacts are provided by residues 32–39, 59–63, 77–80, 144–147, and 178–180; these read GRSNAGKS, GRTQQ, DLPG, TKAD, and FSS. Mg(2+)-binding residues include S39 and T61.

This sequence belongs to the TRAFAC class TrmE-Era-EngA-EngB-Septin-like GTPase superfamily. EngB GTPase family. It depends on Mg(2+) as a cofactor.

Functionally, necessary for normal cell division and for the maintenance of normal septation. The polypeptide is Probable GTP-binding protein EngB (Xylella fastidiosa (strain Temecula1 / ATCC 700964)).